The primary structure comprises 42 residues: Photosystem I reaction center subunit IX (42 aa).

A helical membrane pass occupies residues 7-27 (YLSVAPVLSTLWFGALAGLLI).

It belongs to the PsaJ family.

Its subcellular location is the plastid. The protein localises to the chloroplast thylakoid membrane. In terms of biological role, may help in the organization of the PsaE and PsaF subunits. The chain is Photosystem I reaction center subunit IX from Platanus occidentalis (Sycamore).